Reading from the N-terminus, the 2559-residue chain is Ubiquitin carboxyl-terminal hydrolase 9X (2559 aa).

The span at 1 to 44 (MTATTRGSPVGGNDNQGQAPDGQSQPPLQQNQTSSPDSSNENSP) shows a compositional bias: polar residues. A disordered region spans residues 1 to 64 (MTATTRGSPV…DAPPQIEDEE (64 aa)). 3 positions are modified to phosphoserine: serine 374, serine 375, and serine 588. The interval 967–999 (QISSNMPSSPDSSSDSSTGSPGNHGNHYSDGPN) is disordered. Over residues 969–989 (SSNMPSSPDSSSDSSTGSPGN) the composition is skewed to low complexity. One can recognise a USP domain in the interval 1557–1956 (VGLKNAGATC…NAYILFYERM (400 aa)). Residue cysteine 1566 is the Nucleophile of the active site. The tract at residues 1592–1633 (GSDVDDDMSGDEKQDNESNVDPRDDVFGYPQQFEDKPPLSKT) is disordered. Serine 1600 is modified (phosphoserine). Composition is skewed to basic and acidic residues over residues 1601 to 1617 (GDEK…RDDV) and 1624 to 1633 (FEDKPPLSKT). Zn(2+) is bound by residues cysteine 1727, histidine 1729, cysteine 1771, and cysteine 1774. Histidine 1879 acts as the Proton acceptor in catalysis. The residue at position 2443 (serine 2443) is a Phosphoserine. The span at 2475–2484 (PEEEPDDQDA) shows a compositional bias: acidic residues. The disordered stretch occupies residues 2475–2559 (PEEEPDDQDA…QTKGSVKCTY (85 aa)). Polar residues-rich tracts occupy residues 2503-2513 (PGSQYQQNNHV) and 2527-2537 (NNPQRTGQRAQ). Position 2540 is a phosphotyrosine (tyrosine 2540). Residue serine 2547 is modified to Phosphoserine. Threonine 2551 carries the post-translational modification Phosphothreonine.

Belongs to the peptidase C19 family. As to quaternary structure, interacts with SMAD4, MARK4, NUAK1 and BIRC5/survivin. Interacts with DCX. Interacts with OTUD4 and USP7; the interaction is direct. Highest levels in liver and brain with expression also detected in heart, muscle, spleen and kidney (at protein leve). Ubiquitously expressed in adult tissues.

It is found in the cytoplasm. The protein resides in the cytosol. Its subcellular location is the cell projection. The protein localises to the growth cone. It localises to the cytoskeleton. It is found in the cilium axoneme. The catalysed reaction is Thiol-dependent hydrolysis of ester, thioester, amide, peptide and isopeptide bonds formed by the C-terminal Gly of ubiquitin (a 76-residue protein attached to proteins as an intracellular targeting signal).. Deubiquitinase involved both in the processing of ubiquitin precursors and of ubiquitinated proteins. May therefore play an important regulatory role at the level of protein turnover by preventing degradation of proteins through the removal of conjugated ubiquitin. Specifically hydrolyzes 'Lys-11'-, followed by 'Lys-63'-, 'Lys-48'- and 'Lys-6'-linked polyubiquitins chains. Essential component of TGF-beta/BMP signaling cascade. Specifically deubiquitinates monoubiquitinated SMAD4, opposing the activity of E3 ubiquitin-protein ligase TRIM33. Deubiquitinates alkylation repair enzyme ALKBH3. OTUD4 recruits USP7 and USP9X to stabilize ALKBH3, thereby promoting the repair of alkylated DNA lesions. Deubiquitinates RNA demethylase enzyme ALKBH5, promoting its stability. Deubiquitinates mTORC2 complex component RICTOR at 'Lys-294' by removing 'Lys-63'-linked polyubiquitin chains, stabilizing RICTOR and enhancing its binding to MTOR, thus promoting mTORC2 complex assembly. Regulates chromosome alignment and segregation in mitosis by regulating the localization of BIRC5/survivin to mitotic centromeres. Involved in axonal growth and neuronal cell migration. Regulates cellular clock function by enhancing the protein stability and transcriptional activity of the core circadian protein BMAL1 via its deubiquitinating activity. Acts as a regulator of peroxisome import by mediating deubiquitination of PEX5: specifically deubiquitinates PEX5 monoubiquitinated at 'Cys-11' following its retrotranslocation into the cytosol, resetting PEX5 for a subsequent import cycle. Deubiquitinates PEG10. Inhibits the activation of the Hippo signaling pathway via deubiquitination of AMOTL2 at 'Lys-337' and 'Lys-404' which prohibits its interaction with and activation of LATS2. Loss of LATS2 activation and subsequent loss of YAP1 phosphorylation results in an increase in YAP1-driven transcription of target genes. This chain is Ubiquitin carboxyl-terminal hydrolase 9X, found in Mus musculus (Mouse).